The primary structure comprises 312 residues: Non-structural protein 12A (312 aa).

Residues 1–23 (MFKSGSGSLKRSGSISSVKSFSG) are compositionally biased toward low complexity. Disordered stretches follow at residues 1-37 (MFKS…RGSV), 62-97 (FVPE…YNQN), and 112-159 (SSKG…SHGT). Positions 63–73 (VPEKTKSEGNL) are enriched in basic and acidic residues. Residues 74-97 (KNKSSVITGNFGSSGPTNAHYNQN) show a composition bias toward polar residues. The segment covering 122-134 (DARHTATDSRLSQ) has biased composition (basic and acidic residues). Positions 135-154 (EVKQPFSEENASGNDLNTGR) are enriched in polar residues.

This sequence belongs to the phytoreovirus non-structural protein Pns12A family.

The protein resides in the host cytoplasm. Functionally, constituent of viral factories. The sequence is that of Non-structural protein 12A from Rice dwarf virus (isolate O) (RDV).